Here is a 228-residue protein sequence, read N- to C-terminus: Small ribosomal subunit protein uS2 (228 aa).

This sequence belongs to the universal ribosomal protein uS2 family.

This Buchnera aphidicola subsp. Baizongia pistaciae (strain Bp) protein is Small ribosomal subunit protein uS2.